Consider the following 461-residue polypeptide: D-phenylhydantoinase (461 aa).

A divalent metal cation contacts are provided by His-59, His-61, and Lys-151. Lys-151 bears the N6-carboxylysine mark. Tyr-156 serves as a coordination point for substrate. 2 residues coordinate a divalent metal cation: His-182 and His-239. Ser-286 serves as a coordination point for substrate. Asp-313 provides a ligand contact to a divalent metal cation. Residue Asn-335 participates in substrate binding.

It belongs to the metallo-dependent hydrolases superfamily. Hydantoinase/dihydropyrimidinase family. Homotetramer. It depends on a divalent metal cation as a cofactor. Carboxylation allows a single lysine to coordinate two divalent metal cations.

The enzyme catalyses D-5-phenylhydantoin + H2O = N-carbamoyl-D-phenylglycine + H(+). In terms of biological role, catalyzes the stereospecific hydrolysis of the cyclic amide bond of D-hydantoin derivatives with an aromatic side chains at the 5'-position. Has no activity on dihydropyrimidines. The physiological function is unknown. The chain is D-phenylhydantoinase from Escherichia coli O127:H6 (strain E2348/69 / EPEC).